A 500-amino-acid polypeptide reads, in one-letter code: MKSSLVILYHREPYDEVRENGKTFYRDKTSPNGIMPTLKSFFANAEQSTWVAWKQISGKQQENFQAKMAFPGQENSVVHRIPLSADQVKNFYHITSKEAFWPILHSFPWQFTYDSSDWENFKQINEMFAEAACEDADDDALFWVHDYNLWLTPYFIRQKKPNAKIAFFHHTPFPSVDIFNILPWREAIVDSLLCCDLCGFHLPRYVQNFVAVARSLRKVEITRQVPVDEHAFTAVGTALAEPEITTQLKYKDHLVNLDAFPVGTNPTQIRAQVEKASTQERIRKIREELGSNKLILSAGRVDYVKGTKEMLVCYERLLERRPELQTKVNLVVAAAKAASGMRVYKNAQSEIERLVGRINGRFAKLNWTPILLFTSALSYEELLGFFGAADIAWITPLRDGLNLVAKEYVVAHGCDDGVLILSEFAGSAVELPDAILTNPYAAKRMDESIDQALAMPVEEQQRRMKSMYQAIQRYDVQQWANHMFREAKATAVLGKEPTPV.

The protein belongs to the glycosyltransferase 20 family.

It carries out the reaction ADP-alpha-D-glucose + sn-glycerol 3-phosphate = 2-O-(alpha-D-glucopyranosyl)-sn-glycerol 3-phosphate + ADP + H(+). It participates in glycan metabolism; glucosylglycerol biosynthesis. Its function is as follows. Involved in salt tolerance by producing GG-phosphate from ADP-glucose and glycerol-3-phosphate (G3P), an intermediate in the synthesis of the osmolyte glucosylglycerol (GG). This chain is Glucosylglycerol-phosphate synthase (ggpS), found in Picosynechococcus sp. (strain ATCC 27264 / PCC 7002 / PR-6) (Agmenellum quadruplicatum).